The primary structure comprises 238 residues: SPbeta prophage-derived uncharacterized protein YorM (238 aa).

The first 37 residues, 1–37 (MFKKLIDKHKKYVYHRINKMALFATIGLLGVGLVYSA), serve as a signal peptide directing secretion. Basic residues predominate over residues 111-121 (TKTKKVQKTNT). The disordered stretch occupies residues 111 to 132 (TKTKKVQKTNTKRNLDKAVSKS).

This Bacillus subtilis (strain 168) protein is SPbeta prophage-derived uncharacterized protein YorM (yorM).